The primary structure comprises 293 residues: Digeranylgeranylglyceryl phosphate synthase (293 aa).

Transmembrane regions (helical) follow at residues 26–46 (LMYG…FSDL), 50–70 (LLGY…NDYF), 107–127 (FVAA…VSVL), 140–160 (FAGN…GSII), 215–235 (IASL…FLLP), 237–257 (FLFD…LIYV), and 273–293 (YRKV…AGAF).

This sequence belongs to the UbiA prenyltransferase family. DGGGP synthase subfamily. The cofactor is Mg(2+).

Its subcellular location is the cell membrane. It catalyses the reaction sn-3-O-(geranylgeranyl)glycerol 1-phosphate + (2E,6E,10E)-geranylgeranyl diphosphate = 2,3-bis-O-(geranylgeranyl)-sn-glycerol 1-phosphate + diphosphate. It functions in the pathway membrane lipid metabolism; glycerophospholipid metabolism. Functionally, prenyltransferase that catalyzes the transfer of the geranylgeranyl moiety of geranylgeranyl diphosphate (GGPP) to the C2 hydroxyl of (S)-3-O-geranylgeranylglyceryl phosphate (GGGP). This reaction is the second ether-bond-formation step in the biosynthesis of archaeal membrane lipids. The protein is Digeranylgeranylglyceryl phosphate synthase of Archaeoglobus fulgidus (strain ATCC 49558 / DSM 4304 / JCM 9628 / NBRC 100126 / VC-16).